The sequence spans 744 residues: Protein zyg-11 homolog B (744 aa).

3 LRR repeats span residues 185 to 208 (LPRLESLDISNTSITDITALLACK), 216 to 236 (MHHLKCLKMTTTQILDVVREL), and 237 to 261 (KHLNHLDISDDKQFTSDIALRLLEQ).

Belongs to the zyg-11 family. (Microbial infection) Interacts with SARS-COV-2 protein ORF10. In terms of assembly, interacts with ELOC/Elongin C. Part of an E3 ubiquitin ligase complex including ZYG11B, CUL2 and Elongin BC. Post-translationally, (Microbial infection) Ubiquitinated; leading to proteasomal degradation in the presence of herpes simplex virus 1/HHV-1.

Its subcellular location is the cytoplasm. Serves as substrate adapter subunit in the E3 ubiquitin ligase complex ZYG11B-CUL2-Elongin BC. Acts to target substrates bearing N-terminal degrons for proteasomal degradation with the first four residues of substrates being the key recognition elements. Prefers Nt-Gly but also has the capacity to recognize Nt-Ser, -Ala and -Cys. Involved in the clearance of proteolytic fragments generated by caspase cleavage during apoptosis since N-terminal glycine degrons are strongly enriched at caspase cleavage sites. Also important in the quality control of protein N-myristoylation in which N-terminal glycine degrons are conditionally exposed after a failure of N-myristoylation. In addition, plays a role in the amplification of cGAS to enhance innate immune response. Mechanistically, strengthens the processes of cGAS binding with dsDNA and assembling oligomers and also accelerates and stabilizes cGAS-DNA condensation, thereby enhancing production of antiviral IFNs and inflammatory cytokines. This chain is Protein zyg-11 homolog B, found in Homo sapiens (Human).